A 462-amino-acid chain; its full sequence is tRNA(Ile)-lysidine synthase (462 aa).

26 to 31 (SGGVDS) is an ATP binding site.

It belongs to the tRNA(Ile)-lysidine synthase family.

It localises to the cytoplasm. It catalyses the reaction cytidine(34) in tRNA(Ile2) + L-lysine + ATP = lysidine(34) in tRNA(Ile2) + AMP + diphosphate + H(+). Ligates lysine onto the cytidine present at position 34 of the AUA codon-specific tRNA(Ile) that contains the anticodon CAU, in an ATP-dependent manner. Cytidine is converted to lysidine, thus changing the amino acid specificity of the tRNA from methionine to isoleucine. This is tRNA(Ile)-lysidine synthase from Enterococcus faecalis (strain ATCC 700802 / V583).